The sequence spans 388 residues: S-adenosylmethionine synthase (388 aa).

Residue His-16 participates in ATP binding. Residue Asp-18 coordinates Mg(2+). Residue Glu-44 coordinates K(+). Residues Glu-57 and Gln-100 each contribute to the L-methionine site. Positions Gln-100 to Arg-110 are flexible loop. ATP is bound by residues Asp-165–Lys-167, Asp-240, Arg-246–Lys-247, Ala-263, and Lys-267. An L-methionine-binding site is contributed by Asp-240. Lys-271 lines the L-methionine pocket.

It belongs to the AdoMet synthase family. Homotetramer; dimer of dimers. It depends on Mg(2+) as a cofactor. K(+) is required as a cofactor.

Its subcellular location is the cytoplasm. It carries out the reaction L-methionine + ATP + H2O = S-adenosyl-L-methionine + phosphate + diphosphate. Its pathway is amino-acid biosynthesis; S-adenosyl-L-methionine biosynthesis; S-adenosyl-L-methionine from L-methionine: step 1/1. Catalyzes the formation of S-adenosylmethionine (AdoMet) from methionine and ATP. The overall synthetic reaction is composed of two sequential steps, AdoMet formation and the subsequent tripolyphosphate hydrolysis which occurs prior to release of AdoMet from the enzyme. This chain is S-adenosylmethionine synthase, found in Acinetobacter baumannii (strain ACICU).